A 329-amino-acid polypeptide reads, in one-letter code: Malate dehydrogenase 2 (329 aa).

Position 12–18 (12–18) interacts with NAD(+); the sequence is GAAGQIA. Substrate contacts are provided by Arg93 and Arg99. NAD(+)-binding positions include Asn106, Gln113, and 130–132; that span reads VGN. Residues Asn132 and Arg163 each contribute to the substrate site. The active-site Proton acceptor is the His188.

Belongs to the LDH/MDH superfamily. MDH type 2 family.

The enzyme catalyses (S)-malate + NAD(+) = oxaloacetate + NADH + H(+). Its function is as follows. Catalyzes the reversible oxidation of malate to oxaloacetate. This is Malate dehydrogenase 2 from Burkholderia thailandensis (strain ATCC 700388 / DSM 13276 / CCUG 48851 / CIP 106301 / E264).